Consider the following 123-residue polypeptide: Small ribosomal subunit protein uS12 (123 aa).

3-methylthioaspartic acid is present on D89.

It belongs to the universal ribosomal protein uS12 family. In terms of assembly, part of the 30S ribosomal subunit. Contacts proteins S8 and S17. May interact with IF1 in the 30S initiation complex.

With S4 and S5 plays an important role in translational accuracy. Its function is as follows. Interacts with and stabilizes bases of the 16S rRNA that are involved in tRNA selection in the A site and with the mRNA backbone. Located at the interface of the 30S and 50S subunits, it traverses the body of the 30S subunit contacting proteins on the other side and probably holding the rRNA structure together. The combined cluster of proteins S8, S12 and S17 appears to hold together the shoulder and platform of the 30S subunit. This chain is Small ribosomal subunit protein uS12, found in Syntrophobacter fumaroxidans (strain DSM 10017 / MPOB).